A 327-amino-acid polypeptide reads, in one-letter code: Annexin A8 (327 aa).

Annexin repeat units lie at residues 21–92 (FNPD…ALMY), 93–164 (PPYR…CLLQ), 177–249 (GLAL…TVVK), and 253–324 (NLHG…NLVG). Ca(2+) contacts are provided by M266, G268, G270, and D310.

Belongs to the annexin family.

Its function is as follows. This protein is an anticoagulant protein that acts as an indirect inhibitor of the thromboplastin-specific complex, which is involved in the blood coagulation cascade. The sequence is that of Annexin A8 (ANXA8) from Bos taurus (Bovine).